The primary structure comprises 496 residues: MDISISWVVIIVFVLSYLILMDKWRASKLPGNPPPSPPKLPVIGHLHLLRGGLPQHVLRGITQKYGAVAHLQLGEVHSVVLSSAESTKQAMKVLDPTFADRFDSIGSQIMWHNNDDMIFSRYNDHWRQIRKICVSELLSPRNVRSFGFIRQDEMARLIRVFESSEGAAINASEEISKMSCAIVSRAAFGSVLKDQGKLADLVKEALSMASGFELADLYPSSWLLNLLCVNKYRLQRMRGRLDNILDGFLEEHKVKKSGEFGGEDIVDVLYRMQKDTEMKAPITNNGIKGFIFDVFSAGTETSATTIQWALSELMKNPEKMVKAQAEVREKLKGKTNPDVADVQELKYLHSVVKETLRLHPPFPLIPRLCKEECEVTGYTIPAKTRTLVNVWSIGRDPAYWKDPDTFNPDRFDEVSRDVIGNDFELIPFGAGRRVCPGLHFGLANVEVPLAQLLYHFDYKLPSAMTAADMDMSETPGLSGPRKNPLIMIPTIHNPTS.

The helical; Signal-anchor for type II membrane protein transmembrane segment at 1-21 threads the bilayer; the sequence is MDISISWVVIIVFVLSYLILM. Heme is bound at residue cysteine 435. The disordered stretch occupies residues 471-496; that stretch reads MSETPGLSGPRKNPLIMIPTIHNPTS.

It belongs to the cytochrome P450 family. Heme serves as cofactor.

The protein localises to the membrane. The enzyme catalyses gamma-terpinene + 2 reduced [NADPH--hemoprotein reductase] + 2 O2 = carvacrol + 2 oxidized [NADPH--hemoprotein reductase] + 3 H2O + 2 H(+). The catalysed reaction is (4S)-limonene + reduced [NADPH--hemoprotein reductase] + O2 = (1S,5R)-carveol + oxidized [NADPH--hemoprotein reductase] + H2O + H(+). It carries out the reaction (4R)-limonene + reduced [NADPH--hemoprotein reductase] + O2 = (1R,5S)-carveol + oxidized [NADPH--hemoprotein reductase] + H2O + H(+). Its pathway is secondary metabolite biosynthesis; terpenoid biosynthesis. Its function is as follows. Involved in the biosynthesis of phenolic monoterpenes natural products thymol and carvacrol which have a broad range of biological activities acting as antimicrobial compounds, insecticides, antioxidants and pharmaceutical agents. Catalyzes the C2-hydroxylation of gamma-terpinene to produce carvacrol. Mediates also the C6-hydroxylation of (4S)-limonene and (4R)-limonene to form carveol. The polypeptide is Cytochrome P450 71D180 (Origanum majorana (Sweet marjoram)).